Here is a 532-residue protein sequence, read N- to C-terminus: Metal-staphylopine-binding protein CntA (532 aa).

Positions 1 to 20 (MRKLTKMSAMLLASGLILTG) are cleaved as a signal peptide. The N-palmitoyl cysteine moiety is linked to residue C21. C21 carries the S-diacylglycerol cysteine lipid modification. Positions 165, 418, and 448 each coordinate staphylopine.

It belongs to the bacterial solute-binding protein 5 family. The complex is composed of two ATP-binding proteins (CntD and CntF), two transmembrane proteins (CntB and CntC) and a solute-binding protein (CntA).

The protein resides in the cell membrane. Its activity is regulated as follows. Nickel/cobalt import is reduced in the presence of zinc. In terms of biological role, part of the ABC transporter complex CntABCDF (Opp1) involved in the uptake of metal in complex with the metallophore staphylopine (StP). Involved in the import of divalent metals ions such as nickel, cobalt and zinc. Binds the metal via the metallophore StP, and transfers the StP-metal complex to the membrane-bound permease. Binds one molecule of StP/metal. Binds StP/Co(2+) and StP/Ni(2+) tighter than StP/Zn(2+). Plays a major role in nickel/cobalt import in zinc-depleted conditions. Contributes to virulence. Required for full urease activity in vitro. In Staphylococcus aureus (strain NCTC 8325 / PS 47), this protein is Metal-staphylopine-binding protein CntA.